A 468-amino-acid polypeptide reads, in one-letter code: Glutamate--tRNA ligase (468 aa).

A 'HIGH' region motif is present at residues 9 to 19 (PSPTGYLHVGG). Residues Cys98, Cys100, Cys125, and Asp127 each coordinate Zn(2+). Residues 235–239 (KLSKR) carry the 'KMSKS' region motif. Lys238 is an ATP binding site.

This sequence belongs to the class-I aminoacyl-tRNA synthetase family. Glutamate--tRNA ligase type 1 subfamily. As to quaternary structure, monomer. The cofactor is Zn(2+).

It localises to the cytoplasm. It catalyses the reaction tRNA(Glu) + L-glutamate + ATP = L-glutamyl-tRNA(Glu) + AMP + diphosphate. Catalyzes the attachment of glutamate to tRNA(Glu) in a two-step reaction: glutamate is first activated by ATP to form Glu-AMP and then transferred to the acceptor end of tRNA(Glu). The protein is Glutamate--tRNA ligase of Idiomarina loihiensis (strain ATCC BAA-735 / DSM 15497 / L2-TR).